The primary structure comprises 287 residues: Fructose-1,6-bisphosphatase class 1 (287 aa).

Mg(2+)-binding residues include Glu-67, Asp-87, Leu-89, and Asp-90. Substrate-binding positions include 90 to 93, Tyr-195, and Lys-225; that span reads DGSS. Glu-231 contributes to the Mg(2+) binding site.

Belongs to the FBPase class 1 family. As to quaternary structure, homotetramer. Mg(2+) serves as cofactor.

Its subcellular location is the cytoplasm. The catalysed reaction is beta-D-fructose 1,6-bisphosphate + H2O = beta-D-fructose 6-phosphate + phosphate. It participates in carbohydrate biosynthesis; gluconeogenesis. This is Fructose-1,6-bisphosphatase class 1 from Halobacterium salinarum (strain ATCC 29341 / DSM 671 / R1).